Consider the following 1031-residue polypeptide: Receptor-like protein EIX1 (1031 aa).

A signal peptide spans 1–29; the sequence is MDKWKYARLAQFLFTLSLLFLETSFGLGG. An N-linked (GlcNAc...) asparagine glycan is attached at Asn30. The tract at residues 30 to 113 is N-cap; that stretch reads NKTLCLDKER…PRLTGKLSPS (84 aa). Topologically, residues 30 to 971 are extracellular; it reads NKTLCLDKER…DEEEEFPSLE (942 aa). The stretch at 117 to 140 is one LRR 1 repeat; sequence LEYLNYLDLSVNEFERSEIPRFIG. The stretch at 142-165 is one LRR 2; degenerate repeat; that stretch reads LKRLEYLNLSASFFSGVIPIQFQN. N-linked (GlcNAc...) asparagine glycans are attached at residues Asn149 and Asn165. LRR repeat units lie at residues 166-189, 191-215, 216-240, and 243-266; these read LTSLRTLDLGENNLIVKDLRWLSH, SSLEFLSLSSSNFQVNNWFQEITKV, PSLKELDLSGCGLSKLVPSQADLAN, and LISLSVLHLCCNEFSSSSEYSWVF. Residue Asn240 is glycosylated (N-linked (GlcNAc...) asparagine). Residue Asn267 is glycosylated (N-linked (GlcNAc...) asparagine). 14 LRR repeats span residues 269–292, 293–317, 318–341, 346–369, 370–393, 394–416, 417–440, 441–463, 465–487, 488–509, 512–536, 538–559, 561–584, and 586–611; these read TTSLTSIDLLYNQLSGQIDDRFGT, LMYLEHLDLANNLKIEGGVPSSFGN, LTRLRHLDMSNTQTVQWLPELFLR, RKSLEVLGLNENSLFGSIVNATRF, SSLKKLYLQKNMLNGSFMESAGQV, STLEYLDLSENQMRGALPDLALF, PSLRELHLGSNQFRGRIPQGIGKL, SQLRILDVSSNRLEGLPESMGQL, NLESFDASYNVLKGTITESHLSN, LSSLVDLDLSFNSLALKTSFNW, PFQLQVISLPSCNLGPSFPKWLQNQ, NYTVLDISLASISDTLPSWFSS, PPDLKILNLSNNQISGRVSDLIEN, and YGYRVIDLSYNNFSGALPLVPTNVQI. Residue Asn317 is glycosylated (N-linked (GlcNAc...) asparagine). N-linked (GlcNAc...) asparagine glycosylation is found at Asn365 and Asn383. Asn487 carries N-linked (GlcNAc...) asparagine glycosylation. N-linked (GlcNAc...) asparagine glycosylation is found at Asn538, Asn568, and Asn597. Residues 612–629 form an LRR 21; degenerate repeat; that stretch reads FYLHKNQFFGSISSICRS. LRR repeat units lie at residues 630–654, 655–678, 679–703, 705–725, 726–750, and 752–773; these read RTSPTSLDLSHNQFSGELPDCWMNM, TSLAVLNLAYNNFSGEIPHSLGSL, TNLKALYIRQNSLSGMLPSFSQCQG, QILDLGGNKLTGSIPGWIGTD, LLNLRILSLRFNRLHGSIPSIICQL, and FLQILDLSANGLSGKIPHCFNN. N-linked (GlcNAc...) asparagine glycosylation is found at Asn653 and Asn666. Asn773 and Asn781 each carry an N-linked (GlcNAc...) asparagine glycan. LRR repeat units lie at residues 823–847, 848–871, 872–895, and 896–918; these read LLYLKTIDLSSNELIGGVPKEIADM, RGLKSLNLSRNELNGTVIEGIGQM, RMLESLDMSRNQLSGVIPQDLANL, and TFLSVLDLSNNQLSGRIPSSTQL. Asn854, Asn861, and Asn894 each carry an N-linked (GlcNAc...) asparagine glycan. Residues 919 to 971 form a C-cap/acidic domain region; that stretch reads QSFDRSSYSDNAQLCGPPLQECPGYAPPSPLIDHGSNNNPQEHDEEEEFPSLE. A helical membrane pass occupies residues 972–992; it reads FYISMVLSFFVAFWGILGCLI. At 993 to 1031 the chain is on the cytoplasmic side; sequence VNSSWRNAYFKFLTDTTSWLDMISRVWFARLKKKLRRAR.

The protein belongs to the RLP family. Interacts with EIX elicitor protein.

The protein localises to the cell membrane. In terms of biological role, involved in plant defense. Confers resistance to the fungal pathogen T.viride through recognition of the EIX elicitor protein. The sequence is that of Receptor-like protein EIX1 from Solanum lycopersicum (Tomato).